The following is a 353-amino-acid chain: Photosystem II D2 protein (353 aa).

The residue at position 2 (T2) is an N-acetylthreonine. T2 carries the post-translational modification Phosphothreonine. The chain crosses the membrane as a helical span at residues 41–61; that stretch reads CAYFALGGWFTGTTFVTSWYT. Residue H118 participates in chlorophyll a binding. A helical membrane pass occupies residues 125-141; it reads GFMLRQFELARSVQLRP. Pheophytin a is bound by residues Q130 and N143. The helical transmembrane segment at 153–166 threads the bilayer; sequence VFVSVFLIYPLGQS. H198 provides a ligand contact to chlorophyll a. The chain crosses the membrane as a helical span at residues 208-228; the sequence is AALLCAIHGATVENTLFEDGD. 2 residues coordinate a plastoquinone: H215 and F262. H215 provides a ligand contact to Fe cation. A Fe cation-binding site is contributed by H269. Residues 279-295 form a helical membrane-spanning segment; the sequence is GLWMSALGVVGLALNLR.

The protein belongs to the reaction center PufL/M/PsbA/D family. In terms of assembly, PSII is composed of 1 copy each of membrane proteins PsbA, PsbB, PsbC, PsbD, PsbE, PsbF, PsbH, PsbI, PsbJ, PsbK, PsbL, PsbM, PsbT, PsbX, PsbY, PsbZ, Psb30/Ycf12, at least 3 peripheral proteins of the oxygen-evolving complex and a large number of cofactors. It forms dimeric complexes. Requires The D1/D2 heterodimer binds P680, chlorophylls that are the primary electron donor of PSII, and subsequent electron acceptors. It shares a non-heme iron and each subunit binds pheophytin, quinone, additional chlorophylls, carotenoids and lipids. There is also a Cl(-1) ion associated with D1 and D2, which is required for oxygen evolution. The PSII complex binds additional chlorophylls, carotenoids and specific lipids. as cofactor.

Its subcellular location is the plastid. The protein resides in the chloroplast thylakoid membrane. The enzyme catalyses 2 a plastoquinone + 4 hnu + 2 H2O = 2 a plastoquinol + O2. Its function is as follows. Photosystem II (PSII) is a light-driven water:plastoquinone oxidoreductase that uses light energy to abstract electrons from H(2)O, generating O(2) and a proton gradient subsequently used for ATP formation. It consists of a core antenna complex that captures photons, and an electron transfer chain that converts photonic excitation into a charge separation. The D1/D2 (PsbA/PsbD) reaction center heterodimer binds P680, the primary electron donor of PSII as well as several subsequent electron acceptors. D2 is needed for assembly of a stable PSII complex. This Morus indica (Mulberry) protein is Photosystem II D2 protein.